Consider the following 215-residue polypeptide: MIFDPKMLQVYLVGGTQDVHNDVVKFLEKVELAMKSGITAFQYREKGNSKLRPNERVDLGLELRTLCTHYGIPLIVDDDYELAQQINADGVHVGQNDTKIEQVSVAVGHQMFIGYSCNTPEQVERANTMDFIDYIGCGPVFPTKSKSDADTAIGINRLERLNMISERPVVAIGGIDEENMKVVHDTGVAGLAVISLVFDSKDLVATVKKMKNLYK.

4-amino-2-methyl-5-(diphosphooxymethyl)pyrimidine-binding positions include 42–46 (QYREK) and D77. 2 residues coordinate Mg(2+): D78 and D97. A 4-amino-2-methyl-5-(diphosphooxymethyl)pyrimidine-binding site is contributed by S116. Residue 143 to 145 (TKS) participates in 2-[(2R,5Z)-2-carboxy-4-methylthiazol-5(2H)-ylidene]ethyl phosphate binding. A 4-amino-2-methyl-5-(diphosphooxymethyl)pyrimidine-binding site is contributed by K146. Residues G174 and 194-195 (IS) each bind 2-[(2R,5Z)-2-carboxy-4-methylthiazol-5(2H)-ylidene]ethyl phosphate.

It belongs to the thiamine-phosphate synthase family. It depends on Mg(2+) as a cofactor.

The catalysed reaction is 2-[(2R,5Z)-2-carboxy-4-methylthiazol-5(2H)-ylidene]ethyl phosphate + 4-amino-2-methyl-5-(diphosphooxymethyl)pyrimidine + 2 H(+) = thiamine phosphate + CO2 + diphosphate. It carries out the reaction 2-(2-carboxy-4-methylthiazol-5-yl)ethyl phosphate + 4-amino-2-methyl-5-(diphosphooxymethyl)pyrimidine + 2 H(+) = thiamine phosphate + CO2 + diphosphate. It catalyses the reaction 4-methyl-5-(2-phosphooxyethyl)-thiazole + 4-amino-2-methyl-5-(diphosphooxymethyl)pyrimidine + H(+) = thiamine phosphate + diphosphate. It functions in the pathway cofactor biosynthesis; thiamine diphosphate biosynthesis; thiamine phosphate from 4-amino-2-methyl-5-diphosphomethylpyrimidine and 4-methyl-5-(2-phosphoethyl)-thiazole: step 1/1. Its function is as follows. Condenses 4-methyl-5-(beta-hydroxyethyl)thiazole monophosphate (THZ-P) and 2-methyl-4-amino-5-hydroxymethyl pyrimidine pyrophosphate (HMP-PP) to form thiamine monophosphate (TMP). The protein is Thiamine-phosphate synthase of Limosilactobacillus reuteri (strain DSM 20016) (Lactobacillus reuteri).